We begin with the raw amino-acid sequence, 203 residues long: Small ribosomal subunit protein uS4 (203 aa).

The 73-residue stretch at 92–164 (TRLDSVVYLL…LEENRIRNVP (73 aa)) folds into the S4 RNA-binding domain.

It belongs to the universal ribosomal protein uS4 family. In terms of assembly, part of the 30S ribosomal subunit. Contacts protein S5. The interaction surface between S4 and S5 is involved in control of translational fidelity.

Functionally, one of the primary rRNA binding proteins, it binds directly to 16S rRNA where it nucleates assembly of the body of the 30S subunit. Its function is as follows. With S5 and S12 plays an important role in translational accuracy. This Opitutus terrae (strain DSM 11246 / JCM 15787 / PB90-1) protein is Small ribosomal subunit protein uS4.